Here is a 162-residue protein sequence, read N- to C-terminus: Calcium vector protein (162 aa).

At alanine 2 the chain carries N-acetylalanine. EF-hand domains follow at residues 12-47, 49-84, 86-121, and 123-158; these read EEKDECMKIFDIFDRNAENIAPVSDTMDMLTKLGQT, TKRETEAIMKEARGPKGDKKNIGPEEWLTLCSKWVR, DDEEEILRAFKVFDANGDGVIDFDEFKFIMQKVGEE, and LTDAEVEEAMKEADEDGNGVIDIPEFMDLIKKSKNA. Lysine 96 carries the post-translational modification N6,N6,N6-trimethyllysine. 4 residues coordinate Ca(2+): aspartate 99, asparagine 101, aspartate 103, and glutamate 110. Lysine 117 is modified (N6,N6,N6-trimethyllysine). 4 residues coordinate Ca(2+): aspartate 136, aspartate 138, asparagine 140, and glutamate 147.

It localises to the cytoplasm. The exact function of this protein is not yet known. It interacts with CAVPT, a protein also of unknown function, in a calcium-dependent way. This protein binds two calcium ions. The protein is Calcium vector protein of Branchiostoma lanceolatum (Common lancelet).